The primary structure comprises 195 residues: uncharacterized protein (195 aa).

Residues 1 to 20 (MLKFRLILTVLTVLLITVNG) form the signal peptide. Positions 26–195 (IENKSSTSSS…LHNQYPPQQN (170 aa)) are disordered. Asn-28 carries N-linked (GlcNAc...) asparagine glycosylation. Low complexity-rich tracts occupy residues 29–43 (KSSTSSSKSAASKPS) and 74–104 (QSKTAQAQPQPSAQSTNKPSFQNGQQSGGNQ). 2 stretches are compositionally biased toward polar residues: residues 112-123 (DPYQTGSYQGPY) and 151-176 (PKNTVQSGYQQPMPGQQSMQVPNNGP).

In terms of tissue distribution, component of the acid-soluble organic matrix of calcified layers of the shell (at protein level).

It localises to the secreted. This is an uncharacterized protein from Lottia gigantea (Giant owl limpet).